Here is a 1059-residue protein sequence, read N- to C-terminus: IQ motif-containing protein H (1059 aa).

Positions 6-35 (KNKDEVGNILVKVQDDLRQLKKNIVQFTVQ) form a coiled coil. The tract at residues 245 to 267 (MESAESRLLRAPPPSAASASSDN) is disordered. Positions 401-430 (HQAAAVRIQTCWRRYSARTAYLIRLRSKWA) constitute an IQ domain.

This chain is IQ motif-containing protein H (iqch), found in Danio rerio (Zebrafish).